The chain runs to 481 residues: 2-succinylbenzoate--CoA ligase (481 aa).

This sequence belongs to the ATP-dependent AMP-binding enzyme family. MenE subfamily.

It catalyses the reaction 2-succinylbenzoate + ATP + CoA = 2-succinylbenzoyl-CoA + AMP + diphosphate. Its pathway is quinol/quinone metabolism; 1,4-dihydroxy-2-naphthoate biosynthesis; 1,4-dihydroxy-2-naphthoate from chorismate: step 5/7. It participates in quinol/quinone metabolism; menaquinone biosynthesis. Functionally, converts 2-succinylbenzoate (OSB) to 2-succinylbenzoyl-CoA (OSB-CoA). The chain is 2-succinylbenzoate--CoA ligase from Bacillus mycoides (strain KBAB4) (Bacillus weihenstephanensis).